The primary structure comprises 317 residues: Ferrochelatase (317 aa).

2 residues coordinate Fe cation: histidine 187 and glutamate 268.

It belongs to the ferrochelatase family.

The protein localises to the cytoplasm. The enzyme catalyses heme b + 2 H(+) = protoporphyrin IX + Fe(2+). The protein operates within porphyrin-containing compound metabolism; protoheme biosynthesis; protoheme from protoporphyrin-IX: step 1/1. In terms of biological role, catalyzes the ferrous insertion into protoporphyrin IX. This Campylobacter concisus (strain 13826) protein is Ferrochelatase.